Here is a 106-residue protein sequence, read N- to C-terminus: Large ribosomal subunit protein eL42 (106 aa).

The segment at 36–56 is disordered; the sequence is FAQGKRRYDRKQSGYGGQTKP.

Belongs to the eukaryotic ribosomal protein eL42 family.

In Coprinopsis cinerea (strain Okayama-7 / 130 / ATCC MYA-4618 / FGSC 9003) (Inky cap fungus), this protein is Large ribosomal subunit protein eL42 (RPL44).